The chain runs to 485 residues: Bifunctional protein GlmU (485 aa).

A pyrophosphorylase region spans residues 1–241 (MSASDFSSAV…ARELAGVNDR (241 aa)). UDP-N-acetyl-alpha-D-glucosamine contacts are provided by residues 13–16 (LAAG), Lys-27, Gln-84, and 89–90 (GT). A Mg(2+)-binding site is contributed by Asp-114. Positions 151, 166, 181, and 239 each coordinate UDP-N-acetyl-alpha-D-glucosamine. Mg(2+) is bound at residue Asn-239. The linker stretch occupies residues 242 to 262 (VQLAEAGAELNRRTVIAAMRG). The tract at residues 263–485 (GATIVDPATT…AAQNVHNQEG (223 aa)) is N-acetyltransferase. Residues Arg-344 and Lys-362 each contribute to the UDP-N-acetyl-alpha-D-glucosamine site. His-374 acts as the Proton acceptor in catalysis. Residues Tyr-377 and Asn-388 each coordinate UDP-N-acetyl-alpha-D-glucosamine. Acetyl-CoA-binding positions include Ala-391, 397–398 (NY), Ser-416, and Ala-434. The disordered stretch occupies residues 465-485 (RPGTAAAQAAEAAQNVHNQEG). The span at 469–478 (AAAQAAEAAQ) shows a compositional bias: low complexity.

This sequence in the N-terminal section; belongs to the N-acetylglucosamine-1-phosphate uridyltransferase family. It in the C-terminal section; belongs to the transferase hexapeptide repeat family. In terms of assembly, homotrimer. It depends on Mg(2+) as a cofactor.

It localises to the cytoplasm. It carries out the reaction alpha-D-glucosamine 1-phosphate + acetyl-CoA = N-acetyl-alpha-D-glucosamine 1-phosphate + CoA + H(+). The enzyme catalyses N-acetyl-alpha-D-glucosamine 1-phosphate + UTP + H(+) = UDP-N-acetyl-alpha-D-glucosamine + diphosphate. It functions in the pathway nucleotide-sugar biosynthesis; UDP-N-acetyl-alpha-D-glucosamine biosynthesis; N-acetyl-alpha-D-glucosamine 1-phosphate from alpha-D-glucosamine 6-phosphate (route II): step 2/2. The protein operates within nucleotide-sugar biosynthesis; UDP-N-acetyl-alpha-D-glucosamine biosynthesis; UDP-N-acetyl-alpha-D-glucosamine from N-acetyl-alpha-D-glucosamine 1-phosphate: step 1/1. Its pathway is bacterial outer membrane biogenesis; LPS lipid A biosynthesis. In terms of biological role, catalyzes the last two sequential reactions in the de novo biosynthetic pathway for UDP-N-acetylglucosamine (UDP-GlcNAc). The C-terminal domain catalyzes the transfer of acetyl group from acetyl coenzyme A to glucosamine-1-phosphate (GlcN-1-P) to produce N-acetylglucosamine-1-phosphate (GlcNAc-1-P), which is converted into UDP-GlcNAc by the transfer of uridine 5-monophosphate (from uridine 5-triphosphate), a reaction catalyzed by the N-terminal domain. This Corynebacterium glutamicum (strain R) protein is Bifunctional protein GlmU.